Here is a 184-residue protein sequence, read N- to C-terminus: PXMP2/4 family protein 3 (184 aa).

The first 44 residues, 1-44, serve as a signal peptide directing secretion; it reads MSNSKPLSLTDAVTTWYMKKLKSKPIQTKALTSATLSFISSVVA. Helical transmembrane passes span 58 to 78, 97 to 117, and 159 to 179; these read VVKF…WHII, IVDQ…VLAI, and LRVL…SILA.

This sequence belongs to the peroxisomal membrane protein PXMP2/4 family.

The protein localises to the membrane. The protein is PXMP2/4 family protein 3 of Dictyostelium discoideum (Social amoeba).